The chain runs to 367 residues: Chorismate synthase (367 aa).

Arg48 contacts NADP(+). FMN is bound by residues 125-127, 243-244, Gly283, 298-302, and Arg324; these read RSS, NA, and KPTSS.

This sequence belongs to the chorismate synthase family. Homotetramer. It depends on FMNH2 as a cofactor.

It carries out the reaction 5-O-(1-carboxyvinyl)-3-phosphoshikimate = chorismate + phosphate. The protein operates within metabolic intermediate biosynthesis; chorismate biosynthesis; chorismate from D-erythrose 4-phosphate and phosphoenolpyruvate: step 7/7. Functionally, catalyzes the anti-1,4-elimination of the C-3 phosphate and the C-6 proR hydrogen from 5-enolpyruvylshikimate-3-phosphate (EPSP) to yield chorismate, which is the branch point compound that serves as the starting substrate for the three terminal pathways of aromatic amino acid biosynthesis. This reaction introduces a second double bond into the aromatic ring system. The polypeptide is Chorismate synthase (Psychrobacter arcticus (strain DSM 17307 / VKM B-2377 / 273-4)).